We begin with the raw amino-acid sequence, 664 residues long: Zinc finger protein 800 (664 aa).

Residues 69–91 (FECKLCRSLFRGLPNLITHKKFY) form a C2H2-type 1; degenerate zinc finger. Residue K132 forms a Glycyl lysine isopeptide (Lys-Gly) (interchain with G-Cter in SUMO2) linkage. Composition is skewed to polar residues over residues 154 to 179 (IEVTESSSTPEQTEVQIQETSTEQSK) and 207 to 224 (SDEQPQESQADLETSDNS). Residues 154–224 (IEVTESSSTP…QADLETSDNS (71 aa)) form a disordered region. A C2H2-type 2 zinc finger spans residues 230–253 (LICCLCRKEFNSRRGVRRHIRKVH). A Glycyl lysine isopeptide (Lys-Gly) (interchain with G-Cter in SUMO2) cross-link involves residue K279. A C2H2-type 3 zinc finger spans residues 287 to 310 (RSCPVCCKSFATKANVRRHFDEVH). S317 carries the post-translational modification Phosphoserine. T319 carries the post-translational modification Phosphothreonine. A disordered region spans residues 328 to 349 (QPLFLDSISPKKSFKTRKQKSS). Phosphoserine is present on S336. Basic residues predominate over residues 339 to 348 (KSFKTRKQKS). The C2H2-type 4 zinc-finger motif lies at 357–382 (TACKCLLCKRKYSSQIMLKRHMQIVH). A disordered region spans residues 388–476 (GTNSKREKGP…GGQQKTRKPK (89 aa)). Residue K392 forms a Glycyl lysine isopeptide (Lys-Gly) (interchain with G-Cter in SUMO2) linkage. A Glycyl lysine isopeptide (Lys-Gly) (interchain with G-Cter in SUMO1); alternate cross-link involves residue K409. A Glycyl lysine isopeptide (Lys-Gly) (interchain with G-Cter in SUMO2); alternate cross-link involves residue K409. Residues 416–436 (VESSPPSITHSPQNELKGTNH) show a composition bias toward polar residues. Residues S422, S426, S455, S457, S460, and S462 each carry the phosphoserine modification. Polar residues predominate over residues 458–470 (PKSTSPSAAGGQQ). A Glycyl lysine isopeptide (Lys-Gly) (interchain with G-Cter in SUMO2) cross-link involves residue K476. 2 consecutive C2H2-type zinc fingers follow at residues 486–508 (LYCKLCKRQFTSKQNLTKHIELH) and 519–542 (YKCPLCTYETRRKRDVIRHITVVH). 2 disordered regions span residues 574 to 599 (KRGPSRDEAKHSDSKHDGTSNSPSKK) and 635 to 664 (HHKKTHKANASNSPEGNKTKGRSTRSKALV). Positions 577 to 591 (PSRDEAKHSDSKHDG) are enriched in basic and acidic residues. Residue K599 forms a Glycyl lysine isopeptide (Lys-Gly) (interchain with G-Cter in SUMO2) linkage. The C2H2-type 7 zinc finger occupies 618–640 (HRCNKCGKAFAKKTYLEHHKKTH). Residues 653–664 (TKGRSTRSKALV) show a composition bias toward basic residues.

Belongs to the krueppel C2H2-type zinc-finger protein family.

It localises to the nucleus. May be involved in transcriptional regulation. The protein is Zinc finger protein 800 (ZNF800) of Homo sapiens (Human).